Consider the following 569-residue polypeptide: Urease subunit alpha (569 aa).

One can recognise a Urease domain in the interval 131-569 (GSIDTHIHFI…VPMAQRYFLL (439 aa)). His136, His138, and Lys219 together coordinate Ni(2+). Lys219 carries the post-translational modification N6-carboxylysine. Position 221 (His221) interacts with substrate. His248 and His274 together coordinate Ni(2+). The active-site Proton donor is the His322. Asp362 serves as a coordination point for Ni(2+).

The protein belongs to the metallo-dependent hydrolases superfamily. Urease alpha subunit family. Heterotrimer of UreA (gamma), UreB (beta) and UreC (alpha) subunits. Three heterotrimers associate to form the active enzyme. Ni cation is required as a cofactor. In terms of processing, carboxylation allows a single lysine to coordinate two nickel ions.

The protein resides in the cytoplasm. It carries out the reaction urea + 2 H2O + H(+) = hydrogencarbonate + 2 NH4(+). It functions in the pathway nitrogen metabolism; urea degradation; CO(2) and NH(3) from urea (urease route): step 1/1. The sequence is that of Urease subunit alpha from Prochlorococcus marinus (strain MIT 9301).